Reading from the N-terminus, the 568-residue chain is MRASQFFISTLKEAPADADITSQKLMIRAGFIRKQAAGIYSWMPMGLRVVRKVETIIREEMNRAGGIEVSLPVVQPAELWQETGRWDAMGAELLRFKDRHERDFALQPTAEEVITDIARRELRSYRALPKNFYQIQTKFRDERRPRFGVMRGREFTMKDAYSFDRSAEDAGKSYDNMYAAYRRIFDRLGLTYRAVAADTGAIGGDRSHEFQVIADTGEDAIVYCPTSEYAANIELAEAVAPAGERPAASAALAKVHTPKVKTIAELVDFLKIDIKQTVKAVVVEGEQDEAVLMLVRGDHELNEVKAQKVAGIKNPLAFASPAAIRDAFGANPGSLGPVGFKGRVIADRTVAKMADFVIGANEDDQHYTGANFGRDCAEPEVFDIRNVVEGDPSPDGQGALAIQRGIEVGHVFYLGTKYSAAMNATFLDEDGKPKPFEMGCYGIGVTRILGAAIEQNYDDKGMIWPDSIAPFAVVVCPVGYDRSEAVKEAADKLYADLQARGVDVMLDDRGERPGAMFADWELIGAPHRVTIGDRGLKEGKVEYQHRRDSEATAVAADAILEHVLSKLA.

This sequence belongs to the class-II aminoacyl-tRNA synthetase family. ProS type 1 subfamily. As to quaternary structure, homodimer.

The protein localises to the cytoplasm. The catalysed reaction is tRNA(Pro) + L-proline + ATP = L-prolyl-tRNA(Pro) + AMP + diphosphate. In terms of biological role, catalyzes the attachment of proline to tRNA(Pro) in a two-step reaction: proline is first activated by ATP to form Pro-AMP and then transferred to the acceptor end of tRNA(Pro). As ProRS can inadvertently accommodate and process non-cognate amino acids such as alanine and cysteine, to avoid such errors it has two additional distinct editing activities against alanine. One activity is designated as 'pretransfer' editing and involves the tRNA(Pro)-independent hydrolysis of activated Ala-AMP. The other activity is designated 'posttransfer' editing and involves deacylation of mischarged Ala-tRNA(Pro). The misacylated Cys-tRNA(Pro) is not edited by ProRS. This is Proline--tRNA ligase from Chromobacterium violaceum (strain ATCC 12472 / DSM 30191 / JCM 1249 / CCUG 213 / NBRC 12614 / NCIMB 9131 / NCTC 9757 / MK).